A 247-amino-acid polypeptide reads, in one-letter code: Probable transcriptional regulatory protein YPO2055/y2255/YP_1898 (247 aa).

This sequence belongs to the TACO1 family.

The protein localises to the cytoplasm. The chain is Probable transcriptional regulatory protein YPO2055/y2255/YP_1898 from Yersinia pestis.